The primary structure comprises 579 residues: MPLKHYLLLLVSCQAWAAGLAYYGCPSECTCSRASQVECTGAQIVAMPSPLPWNAMSLQILNTHITELPEDKFLNISALIALKMEKNELANIMPGAFRNLGSLRHLSLANNKLKNLPVRLFQDVNNLETLLLSNNQLVQIQPAQFSQFSNLKELQLYGNNLEYIPEGVFDHLVGLTKLNLGNNGFTHLSPRVFQHLGNLQVLRLYENRLSDIPMGTFDALGNLQELALQENQIGTLSPGLFHNNRNLQRLYLSNNHISHLPPGIFMQLPHLNKLTLFGNSLKELSPGVFGPMPNLRELWLYNNHITSLPDNAFSHLNQLQVLILSHNQLSYISPGAFNGLTNLRELSLHTNALQDLDGNVFRSLANLRNVSLQNNRLRQLPGSIFANVNGLMTIQLQNNNLENLPLGIFDHLGNLCELRLYDNPWRCDSNILPLHDWLILNRARLGTDTLPVCSSPASVRGQSLVIINVNFPGPSVQGPETPEVSSYPDTSSYPDSTSISSTTEITRSTDDDYTDLNTIEPIDDRNTWGMTDAQSGLAIAAIVIGIIALACSLAACICCCCCKKRSQAVLMQMKAPNEC.

The first 21 residues, 1 to 21, serve as a signal peptide directing secretion; the sequence is MPLKHYLLLLVSCQAWAAGLA. The 32-residue stretch at 22 to 53 folds into the LRRNT domain; it reads YYGCPSECTCSRASQVECTGAQIVAMPSPLPW. Topologically, residues 22-536 are extracellular; sequence YYGCPSECTC…TWGMTDAQSG (515 aa). LRR repeat units follow at residues 54–75, 78–99, 102–123, 126–147, 150–171, 174–195, 198–219, 222–243, 246–267, 270–291, 294–315, 318–339, 342–363, 366–387, and 390–411; these read NAMSLQILNTHITELPEDKFLN, ALIALKMEKNELANIMPGAFRN, SLRHLSLANNKLKNLPVRLFQD, NLETLLLSNNQLVQIQPAQFSQ, NLKELQLYGNNLEYIPEGVFDH, GLTKLNLGNNGFTHLSPRVFQH, NLQVLRLYENRLSDIPMGTFDA, NLQELALQENQIGTLSPGLFHN, NLQRLYLSNNHISHLPPGIFMQ, HLNKLTLFGNSLKELSPGVFGP, NLRELWLYNNHITSLPDNAFSH, QLQVLILSHNQLSYISPGAFNG, NLRELSLHTNALQDLDGNVFRS, NLRNVSLQNNRLRQLPGSIFAN, and GLMTIQLQNNNLENLPLGIFDH. N-linked (GlcNAc...) asparagine glycosylation is present at Asn75. N-linked (GlcNAc...) asparagine glycosylation occurs at Asn369. In terms of domain architecture, LRRCT spans 423 to 473; that stretch reads NPWRCDSNILPLHDWLILNRARLGTDTLPVCSSPASVRGQSLVIINVNFPG. The segment at 476 to 509 is disordered; it reads VQGPETPEVSSYPDTSSYPDSTSISSTTEITRST. The segment covering 485–506 has biased composition (low complexity); the sequence is SSYPDTSSYPDSTSISSTTEIT. Residues 537-557 traverse the membrane as a helical segment; sequence LAIAAIVIGIIALACSLAACI. Topologically, residues 558–579 are cytoplasmic; the sequence is CCCCCKKRSQAVLMQMKAPNEC.

In terms of tissue distribution, expressed in chodrocytes (at protein level).

It localises to the cell membrane. The chain is Leucine-rich repeat-containing protein 15 (Lrrc15) from Mus musculus (Mouse).